The following is a 234-amino-acid chain: UPF0758 protein Smlt0399 (234 aa).

Residues 103–225 form the MPN domain; sequence VGNNPAAVGR…PVSFAERGLL (123 aa). The Zn(2+) site is built by histidine 174, histidine 176, and aspartate 187. Residues 174 to 187 carry the JAMM motif motif; it reads HNHPSGDPEPSSAD.

It belongs to the UPF0758 family.

The sequence is that of UPF0758 protein Smlt0399 from Stenotrophomonas maltophilia (strain K279a).